Consider the following 218-residue polypeptide: Nuclear cap-binding protein subunit 2 (218 aa).

MRNA-binding positions include tyrosine 24, tyrosine 49, 118 to 122, 129 to 133, and 139 to 140; these read TIDLD, RQFGR, and QV. The 79-residue stretch at 46–124 folds into the RRM domain; that stretch reads ATIYVGNLSF…REITIDLDPG (79 aa). Positions 176–194 are enriched in basic residues; sequence DPHKNHHHHHHGHHHHHGQ. The disordered stretch occupies residues 176–200; it reads DPHKNHHHHHHGHHHHHGQPHAAAA.

It belongs to the RRM NCBP2 family. Component of the nuclear cap-binding complex (CBC).

Its subcellular location is the nucleus. Its function is as follows. Component of the cap-binding complex (CBC) involved in the nuclear export of capped U snRNAs. The CBC complex is required for efficient pre-mRNA splicing through efficient commitment complex and spliceosome formation; and involved in rRNA processing at sites A0, A1 and A2. The protein is Nuclear cap-binding protein subunit 2 (CBC2) of Eremothecium gossypii (strain ATCC 10895 / CBS 109.51 / FGSC 9923 / NRRL Y-1056) (Yeast).